Here is a 1107-residue protein sequence, read N- to C-terminus: uncharacterized protein (1107 aa).

Residues 180-204 (SGNGSSGGNNNNNNNSLNNSNNSIG) show a composition bias toward low complexity. Disordered stretches follow at residues 180–251 (SGNG…SGNN) and 501–530 (LMNI…DNQM). Residues 205–215 (SSGGNGGGGSN) show a composition bias toward gly residues. Residues 219-237 (PSMSPQFTSISKTNSPQII) are compositionally biased toward polar residues. Low complexity-rich tracts occupy residues 238–251 (NTSS…SGNN) and 501–521 (LMNI…NNND). Coiled-coil stretches lie at residues 789–816 (KKDI…IYRE) and 940–1012 (NIDH…NMLK).

This is an uncharacterized protein from Dictyostelium discoideum (Social amoeba).